A 464-amino-acid polypeptide reads, in one-letter code: tRNA(Ile2) 2-agmatinylcytidine synthetase TiaS (464 aa).

The protein belongs to the TiaS family.

Its subcellular location is the cytoplasm. It carries out the reaction cytidine(34) in tRNA(Ile2) + agmatine + ATP + H2O = 2-agmatinylcytidine(34) in tRNA(Ile2) + AMP + 2 phosphate + 2 H(+). In terms of biological role, ATP-dependent agmatine transferase that catalyzes the formation of 2-agmatinylcytidine (agm2C) at the wobble position (C34) of tRNA(Ile2), converting the codon specificity from AUG to AUA. The polypeptide is tRNA(Ile2) 2-agmatinylcytidine synthetase TiaS (Ignisphaera aggregans (strain DSM 17230 / JCM 13409 / AQ1.S1)).